The following is a 434-amino-acid chain: MTDAHQADDVRYQPLNELDPEVAAAIAGELARQRDTLEMIASENFVPRSVLQAQGSVLTNKYAEGYPGRRYYGGCEQVDIIEDLARDRAKALFGAEFANVQPHSGAQANAAVLMTLAEPGDKIMGLSLAHGGHLTHGMKLNFSGKLYEVVAYGVDPETMRVDMDQVREIALKEQPKVIIAGWSAYPRHLDFEAFQSIAAEVGAKLWVDMAHFAGLVAAGLHPSPVPYSDVVSSTVHKTLGGPRSGIILAKQEYAKKLNSSVFPGQQGGPLMHAVAAKATSLKIAGTEQFRDRQARTLEGARILAERLTASDAKAAGVDVLTGGTDVHLVLADLRNSQMDGQQAEDLLHEVGITVNRNAVPFDPRPPMVTSGLRIGTPALATRGFDIPAFTEVADIIGTALANGKSADIESLRGRVAKLAADYPLYEGLEDWTIV.

(6S)-5,6,7,8-tetrahydrofolate contacts are provided by residues Leu-128 and 132–134 (GHL). Lys-237 carries the N6-(pyridoxal phosphate)lysine modification.

Belongs to the SHMT family. Homodimer. Requires pyridoxal 5'-phosphate as cofactor.

The protein resides in the cytoplasm. The catalysed reaction is (6R)-5,10-methylene-5,6,7,8-tetrahydrofolate + glycine + H2O = (6S)-5,6,7,8-tetrahydrofolate + L-serine. Its pathway is one-carbon metabolism; tetrahydrofolate interconversion. It functions in the pathway amino-acid biosynthesis; glycine biosynthesis; glycine from L-serine: step 1/1. Functionally, catalyzes the reversible interconversion of serine and glycine with tetrahydrofolate (THF) serving as the one-carbon carrier. This reaction serves as the major source of one-carbon groups required for the biosynthesis of purines, thymidylate, methionine, and other important biomolecules. Also exhibits THF-independent aldolase activity toward beta-hydroxyamino acids, producing glycine and aldehydes, via a retro-aldol mechanism. The polypeptide is Serine hydroxymethyltransferase (Corynebacterium glutamicum (strain R)).